The chain runs to 362 residues: Chorismate synthase (362 aa).

Residues Arg-48 and Arg-54 each coordinate NADP(+). FMN-binding positions include 131–133, 243–244, Gly-287, 302–306, and Arg-328; these read RSS, NA, and KPTSS.

Belongs to the chorismate synthase family. In terms of assembly, homotetramer. It depends on FMNH2 as a cofactor.

The enzyme catalyses 5-O-(1-carboxyvinyl)-3-phosphoshikimate = chorismate + phosphate. It functions in the pathway metabolic intermediate biosynthesis; chorismate biosynthesis; chorismate from D-erythrose 4-phosphate and phosphoenolpyruvate: step 7/7. Functionally, catalyzes the anti-1,4-elimination of the C-3 phosphate and the C-6 proR hydrogen from 5-enolpyruvylshikimate-3-phosphate (EPSP) to yield chorismate, which is the branch point compound that serves as the starting substrate for the three terminal pathways of aromatic amino acid biosynthesis. This reaction introduces a second double bond into the aromatic ring system. In Rhodopseudomonas palustris (strain BisB18), this protein is Chorismate synthase.